A 299-amino-acid chain; its full sequence is Protease HtpX homolog (299 aa).

A run of 2 helical transmembrane segments spans residues 14–34 (IVLL…VGYL) and 39–59 (LVGG…SMIF). His-143 serves as a coordination point for Zn(2+). Residue Glu-144 is part of the active site. Position 147 (His-147) interacts with Zn(2+). 2 helical membrane-spanning segments follow: residues 158-178 (IAVA…RMMW) and 198-218 (IILL…ASLV). Residue Glu-227 participates in Zn(2+) binding.

This sequence belongs to the peptidase M48B family. The cofactor is Zn(2+).

Its subcellular location is the cell membrane. This chain is Protease HtpX homolog, found in Streptococcus mutans serotype c (strain ATCC 700610 / UA159).